A 647-amino-acid chain; its full sequence is CRE-binding bZIP protein SKO1 (647 aa).

4 disordered regions span residues 1-119 (MSSE…GSKR), 135-204 (STTN…QMPG), 305-331 (TPTTNTTDGTVNNSISNSNFSPNTSTK), and 353-429 (KENE…EEQE). The span at 51–85 (RNNSTSTITQHSQRSTHSLNSIPEENGNSTVTDNS) shows a compositional bias: polar residues. The residue at position 94 (Ser94) is a Phosphoserine. The residue at position 113 (Thr113) is a Phosphothreonine. Low complexity-rich tracts occupy residues 138–194 (NPSQ…SGNG) and 305–329 (TPTTNTTDGTVNNSISNSNFSPNTS). Polar residues-rich tracts occupy residues 357–368 (NLTTQIENNDQF) and 396–405 (RKNSAVTTAP). Position 399 is a phosphoserine (Ser399). One can recognise a bZIP domain in the interval 429-492 (ERKRKEFLER…PSSSSNSQFN (64 aa)). The basic motif stretch occupies residues 430-451 (RKRKEFLERNRVAASKFRKRKK). The tract at residues 454–461 (IKKIENDL) is leucine-zipper. Ser558 is subject to Phosphoserine.

The protein belongs to the bZIP family.

The protein resides in the nucleus. Binds to the CRE motif 5'-TGACGTCA-3' and acts as a repressor of transcription of the SUC2 gene and most probably other genes. This Saccharomyces cerevisiae (strain ATCC 204508 / S288c) (Baker's yeast) protein is CRE-binding bZIP protein SKO1 (SKO1).